The following is a 382-amino-acid chain: D-galactonate dehydratase (382 aa).

A Mg(2+)-binding site is contributed by Asp183. The active-site Proton donor is His185. Glu209 and Glu235 together coordinate Mg(2+). Catalysis depends on His285, which acts as the Proton acceptor.

It belongs to the mandelate racemase/muconate lactonizing enzyme family. GalD subfamily. It depends on Mg(2+) as a cofactor.

The enzyme catalyses D-galactonate = 2-dehydro-3-deoxy-D-galactonate + H2O. Its pathway is carbohydrate acid metabolism; D-galactonate degradation; D-glyceraldehyde 3-phosphate and pyruvate from D-galactonate: step 1/3. Catalyzes the dehydration of D-galactonate to 2-keto-3-deoxy-D-galactonate. This chain is D-galactonate dehydratase, found in Escherichia coli O45:K1 (strain S88 / ExPEC).